The primary structure comprises 412 residues: DNA utilization protein HofQ (412 aa).

An N-terminal signal peptide occupies residues 1–18; sequence MKQWIAALLLMLIPGVQA.

It belongs to the bacterial secretin family. PilQ subfamily.

It localises to the cell outer membrane. Required for the use of extracellular DNA as a nutrient. Could be the porin responsible for transport of DNA across the outer membrane. The chain is DNA utilization protein HofQ (hofQ) from Escherichia coli (strain K12).